The following is a 327-amino-acid chain: GMP reductase (327 aa).

The Thioimidate intermediate role is filled by cysteine 176. 205 to 228 lines the NADP(+) pocket; sequence IIADGGIRTHGDIAKSIRFGASMV.

This sequence belongs to the IMPDH/GMPR family. GuaC type 2 subfamily.

The enzyme catalyses IMP + NH4(+) + NADP(+) = GMP + NADPH + 2 H(+). Catalyzes the irreversible NADPH-dependent deamination of GMP to IMP. It functions in the conversion of nucleobase, nucleoside and nucleotide derivatives of G to A nucleotides, and in maintaining the intracellular balance of A and G nucleotides. The protein is GMP reductase of Streptococcus pyogenes serotype M1.